A 668-amino-acid chain; its full sequence is MSDLKIALTHADAREERTVTTGTKAWELFQDDPSVIAARVNGALRDLAHELADGDQVEPVAIDSPDGHDILRHSTAHVMAQAVQQLFPDAKLGIGPPVENGFYYDFDVDTPFNPADLDKIETAMRKIIKEGQRFSRRVTTDADAISELRDEPYKIELIGLKGSGASTGSTTEAVEGASVEVGAGELTIYDNIRRNGDVAWSDLCRGPHLPTTKRIPAFKLMRTAAAYWRGNEKNKQLQRIYGTAWESKDALEEHLHRIEEAERRDHRKLGRDLDLFSFPDEIGSGLPVFHPKGGVIKRVMEDYVRQRHVEEGFEYVGTPHIAKEGLFYTSGHLPYYGEAMFPPLDVDGMDYRLKAMNCPMHNLIFRSRQRSYRELPLRLFEFGHVYRHEKSGVIHGLTRVRGFAQDDSHSYVTKEQAPAEIKHLLDFCLGLFRDFGLDDFYLELSTRDDSKPDKFIGSDEDWAVATKVLEDVCIASGLELVPDPGGAAYYGPKVSVQARDAIGRTWQMSTIQYDFNQPSADRFDLHYTAADGSRQQPVMIHSAKFGSIERFIGVLVEHYAGAFPPWLAPVQVQAIPIAERHNDYLYDVAKRMQAQGLRVEVDDSDDRMQKKIRNAQLLKVPFMMIAGDDDVAAGAVSFRYRDGRQDNGVPLDEAIRRVADAVASREQV.

Residues 1–61 (MSDLKIALTH…ADGDQVEPVA (61 aa)) enclose the TGS domain. The tract at residues 265–564 (DHRKLGRDLD…LVEHYAGAFP (300 aa)) is catalytic. The Zn(2+) site is built by Cys-358, His-409, and His-541.

It belongs to the class-II aminoacyl-tRNA synthetase family. In terms of assembly, homodimer. Requires Zn(2+) as cofactor.

Its subcellular location is the cytoplasm. The enzyme catalyses tRNA(Thr) + L-threonine + ATP = L-threonyl-tRNA(Thr) + AMP + diphosphate + H(+). Catalyzes the attachment of threonine to tRNA(Thr) in a two-step reaction: L-threonine is first activated by ATP to form Thr-AMP and then transferred to the acceptor end of tRNA(Thr). Also edits incorrectly charged L-seryl-tRNA(Thr). The polypeptide is Threonine--tRNA ligase (Nocardioides sp. (strain ATCC BAA-499 / JS614)).